The chain runs to 574 residues: Serine hydroxymethyltransferase (574 aa).

180–182 is a (6S)-5,6,7,8-tetrahydrofolate binding site; sequence GHL. Residue lysine 288 is modified to N6-(pyridoxal phosphate)lysine. Glutamate 306 is a (6S)-5,6,7,8-tetrahydrofolate binding site.

The protein belongs to the SHMT family. In terms of assembly, homodimer. Requires pyridoxal 5'-phosphate as cofactor.

The protein localises to the cytoplasm. The enzyme catalyses (6R)-5,10-methylene-5,6,7,8-tetrahydrofolate + glycine + H2O = (6S)-5,6,7,8-tetrahydrofolate + L-serine. It functions in the pathway one-carbon metabolism; tetrahydrofolate interconversion. Its pathway is amino-acid biosynthesis; glycine biosynthesis; glycine from L-serine: step 1/1. Catalyzes the reversible interconversion of serine and glycine with tetrahydrofolate (THF) serving as the one-carbon carrier. This reaction serves as the major source of one-carbon groups required for the biosynthesis of purines, thymidylate, methionine, and other important biomolecules. Also exhibits THF-independent aldolase activity toward beta-hydroxyamino acids, producing glycine and aldehydes, via a retro-aldol mechanism. This chain is Serine hydroxymethyltransferase, found in Treponema pallidum (strain Nichols).